Here is a 645-residue protein sequence, read N- to C-terminus: UvrABC system protein C (645 aa).

One can recognise a GIY-YIG domain in the interval threonine 12–valine 91. The 36-residue stretch at alanine 202–leucine 237 folds into the UVR domain.

Belongs to the UvrC family. As to quaternary structure, interacts with UvrB in an incision complex.

Its subcellular location is the cytoplasm. In terms of biological role, the UvrABC repair system catalyzes the recognition and processing of DNA lesions. UvrC both incises the 5' and 3' sides of the lesion. The N-terminal half is responsible for the 3' incision and the C-terminal half is responsible for the 5' incision. The sequence is that of UvrABC system protein C from Acidobacterium capsulatum (strain ATCC 51196 / DSM 11244 / BCRC 80197 / JCM 7670 / NBRC 15755 / NCIMB 13165 / 161).